The sequence spans 521 residues: MASALADAMTSSGRDLVVLDHGGWRRHPWAEVHQRAENIAARITEDAATVVVLVGEPTVEFIAAIPGTLYAGAALSILPGPVRGADLGQWARNTMQRCASIGVRLVFSHGEHLDALRATPASIPTCDVTETGHARRDSSFTPPDHGEFAVLQGTAGSTGIPRTAQLSPEAVLANLRGLVACIDITPADTGCSWLPLYHDMGLAFLLTNALGGAELWQAPTTAFSASPFSWLQWMTESTATLTAAPNMAYGLIGKYGSRLTDFDLGALRFALNGGEPVDCQGYRRFATEMARFGLDPSALVPAYGLAESSCAVTVPILGSGLQVDEVQVSSDDGRFIRTHAVVGEPIPGMQVRIAPTDGSGEQVDGRDFGEIEVRGTSLMSGYLGEPPLEAGSWFPTGDLGYFVDSGLVVCGRAKELITVAGRNIFPAEVERVAAQVQGVREGAVVAVGTDESAVRPGLVIAAEFRGTDEPAARTELVQRVASECGVVPSNVVFLEPGALPRTSSGKLRRLEVKRSMEDVNR.

This sequence belongs to the ATP-dependent AMP-binding enzyme family.

The enzyme catalyses a long-chain fatty acid + holo-[ACP] + ATP = a long-chain fatty acyl-[ACP] + AMP + diphosphate. It catalyses the reaction a medium-chain fatty acid + holo-[ACP] + ATP = a medium-chain fatty acyl-[ACP] + AMP + diphosphate. The protein operates within siderophore biosynthesis; mycobactin biosynthesis. Activates lipidic moieties required for mycobactin biosynthesis. Converts medium- to long-chain aliphatic fatty acids into acyl adenylate, which is further transferred on to the phosphopantetheine arm of the carrier protein MbtL. The chain is Medium/long-chain-fatty-acid--[acyl-carrier-protein] ligase MbtM (mbtM) from Mycobacterium sp. (strain MCS).